A 196-amino-acid polypeptide reads, in one-letter code: ATP-dependent Clp protease proteolytic subunit (196 aa).

Residue Ser-97 is the Nucleophile of the active site. His-122 is an active-site residue.

The protein belongs to the peptidase S14 family. As to quaternary structure, fourteen ClpP subunits assemble into 2 heptameric rings which stack back to back to give a disk-like structure with a central cavity, resembling the structure of eukaryotic proteasomes.

The protein resides in the cytoplasm. It catalyses the reaction Hydrolysis of proteins to small peptides in the presence of ATP and magnesium. alpha-casein is the usual test substrate. In the absence of ATP, only oligopeptides shorter than five residues are hydrolyzed (such as succinyl-Leu-Tyr-|-NHMec, and Leu-Tyr-Leu-|-Tyr-Trp, in which cleavage of the -Tyr-|-Leu- and -Tyr-|-Trp bonds also occurs).. In terms of biological role, cleaves peptides in various proteins in a process that requires ATP hydrolysis. Has a chymotrypsin-like activity. Plays a major role in the degradation of misfolded proteins. The protein is ATP-dependent Clp protease proteolytic subunit of Lacticaseibacillus paracasei (strain ATCC 334 / BCRC 17002 / CCUG 31169 / CIP 107868 / KCTC 3260 / NRRL B-441) (Lactobacillus paracasei).